Consider the following 124-residue polypeptide: Holo-[acyl-carrier-protein] synthase (124 aa).

Residues aspartate 5 and glutamate 51 each coordinate Mg(2+).

The protein belongs to the P-Pant transferase superfamily. AcpS family. The cofactor is Mg(2+).

It is found in the cytoplasm. It carries out the reaction apo-[ACP] + CoA = holo-[ACP] + adenosine 3',5'-bisphosphate + H(+). Functionally, transfers the 4'-phosphopantetheine moiety from coenzyme A to a Ser of acyl-carrier-protein. In Hydrogenobaculum sp. (strain Y04AAS1), this protein is Holo-[acyl-carrier-protein] synthase.